Consider the following 371-residue polypeptide: Aminomethyltransferase (371 aa).

This sequence belongs to the GcvT family. In terms of assembly, the glycine cleavage system is composed of four proteins: P, T, L and H.

It carries out the reaction N(6)-[(R)-S(8)-aminomethyldihydrolipoyl]-L-lysyl-[protein] + (6S)-5,6,7,8-tetrahydrofolate = N(6)-[(R)-dihydrolipoyl]-L-lysyl-[protein] + (6R)-5,10-methylene-5,6,7,8-tetrahydrofolate + NH4(+). Its function is as follows. The glycine cleavage system catalyzes the degradation of glycine. The protein is Aminomethyltransferase of Leptospira interrogans serogroup Icterohaemorrhagiae serovar Lai (strain 56601).